A 693-amino-acid polypeptide reads, in one-letter code: Phosphoribosylformylglycinamidine synthase subunit PurL (693 aa).

H34 is a catalytic residue. The ATP site is built by Y37 and K76. Position 78 (E78) interacts with Mg(2+). Residues 79–82 and R101 each bind substrate; that span reads SHNH. Residue H80 is the Proton acceptor of the active site. D102 contributes to the Mg(2+) binding site. Q222 lines the substrate pocket. D248 serves as a coordination point for Mg(2+). 292–294 contacts substrate; the sequence is ETQ. Residues D470 and G507 each contribute to the ATP site. S510 serves as a coordination point for substrate.

This sequence belongs to the FGAMS family. As to quaternary structure, monomer. Part of the FGAM synthase complex composed of 1 PurL, 1 PurQ and 2 PurS subunits.

It is found in the cytoplasm. It catalyses the reaction N(2)-formyl-N(1)-(5-phospho-beta-D-ribosyl)glycinamide + L-glutamine + ATP + H2O = 2-formamido-N(1)-(5-O-phospho-beta-D-ribosyl)acetamidine + L-glutamate + ADP + phosphate + H(+). It participates in purine metabolism; IMP biosynthesis via de novo pathway; 5-amino-1-(5-phospho-D-ribosyl)imidazole from N(2)-formyl-N(1)-(5-phospho-D-ribosyl)glycinamide: step 1/2. Its function is as follows. Part of the phosphoribosylformylglycinamidine synthase complex involved in the purines biosynthetic pathway. Catalyzes the ATP-dependent conversion of formylglycinamide ribonucleotide (FGAR) and glutamine to yield formylglycinamidine ribonucleotide (FGAM) and glutamate. The FGAM synthase complex is composed of three subunits. PurQ produces an ammonia molecule by converting glutamine to glutamate. PurL transfers the ammonia molecule to FGAR to form FGAM in an ATP-dependent manner. PurS interacts with PurQ and PurL and is thought to assist in the transfer of the ammonia molecule from PurQ to PurL. The sequence is that of Phosphoribosylformylglycinamidine synthase subunit PurL from Pyrobaculum calidifontis (strain DSM 21063 / JCM 11548 / VA1).